We begin with the raw amino-acid sequence, 387 residues long: WD repeat-containing protein 89 (387 aa).

WD repeat units follow at residues 21–65, 68–107, 112–156, 168–208, 214–254, and 319–358; these read KEPT…VLRE, GYPGLLNGVRFANSCDSVYSACTDGTVKCWDARVAREKPV, GYPS…QDLS, THSD…EEDA, NSIS…TDEP, and GHAATVRSFCWNVQDDSLLTGGEDAQLLLWKPGAIEKTFT.

In Pongo abelii (Sumatran orangutan), this protein is WD repeat-containing protein 89 (WDR89).